Reading from the N-terminus, the 1182-residue chain is Tyrosine-protein kinase ABL2 (1182 aa).

The tract at residues 1–42 (MGQQVGRVGEAPGLQQPQPRGIRGSSAARPSGRRRDPAGRTA) is disordered. A lipid anchor (N-myristoyl glycine) is attached at glycine 2. The interval 2 to 106 (GQQVGRVGEA…SKENLLGATE (105 aa)) is CAP. Over residues 20-30 (RGIRGSSAARP) the composition is skewed to low complexity. Position 97 is a phosphoserine (serine 97). In terms of domain architecture, SH3 spans 107-167 (SDPNLFVALY…PSNYITPVNS (61 aa)). Phosphotyrosine occurs at positions 116, 161, 174, 185, 218, and 231. The SH2 domain maps to 173-263 (WYHGPVSRSA…GLVTTLHYPA (91 aa)). Phosphotyrosine; by ABL1 and autocatalysis is present on tyrosine 261. The residue at position 272 (tyrosine 272) is a Phosphotyrosine; by autocatalysis. Phosphoserine is present on serine 275. In terms of domain architecture, Protein kinase spans 288-539 (ITMKHKLGGG…PSFAETHQAF (252 aa)). 294–302 (LGGGQYGEV) is a binding site for ATP. Phosphotyrosine is present on residues tyrosine 299 and tyrosine 303. Residues lysine 317 and 362 to 368 (EYMPYGN) each bind ATP. The Proton acceptor role is filled by aspartate 409. The short motif at 427 to 451 (DFGLSRLMTGDTYTAHAGAKFPIKW) is the Kinase activation loop element. The residue at position 439 (tyrosine 439) is a Phosphotyrosine; by autocatalysis and SRC-type Tyr-kinases. The residue at position 459 (tyrosine 459) is a Phosphotyrosine. Tyrosine 568 carries the post-translational modification Phosphotyrosine; by autocatalysis. Residues serine 606, serine 621, serine 632, serine 634, and serine 656 each carry the phosphoserine modification. 2 disordered regions span residues 612–642 (IRST…DAKE) and 655–674 (SSFM…SSFR). The Nuclear localization signal signature appears at 659 to 661 (KKR). 3 positions are modified to phosphoserine: serine 670, serine 671, and serine 672. A Phosphotyrosine; by autocatalysis modification is found at tyrosine 684. The F-actin-binding stretch occupies residues 695-930 (SLQNADGFSV…AVLPTTHNHK (236 aa)). Tyrosine 719 carries the phosphotyrosine modification. Residues 765–796 (LRAGKPTASDDTSKPFPRSNSTSSMSSGLPEQ) are disordered. Lysine 778 is modified (N6-acetyllysine). A compositionally biased stretch (polar residues) spans 782 to 793 (RSNSTSSMSSGL). The residue at position 785 (serine 785) is a Phosphoserine. Threonine 802 is subject to Phosphothreonine. Residues 809–825 (RSKLQLERTVSTSSQPE) are compositionally biased toward polar residues. Residues 809–858 (RSKLQLERTVSTSSQPEENVDRANDMLPKKSEEGAAPARERPKAKLLPRG) form a disordered region. Serine 819 and serine 822 each carry phosphoserine. Residues 827 to 851 (NVDRANDMLPKKSEEGAAPARERPK) show a composition bias toward basic and acidic residues. 2 positions are modified to phosphoserine: serine 915 and serine 936. The disordered stretch occupies residues 964–1059 (HQVTSSGDKD…TSSISPAKMA (96 aa)). Residues 1020 to 1182 (EGGKKAAPGP…VQEISDVVQR (163 aa)) are F-actin-binding.

This sequence belongs to the protein kinase superfamily. Tyr protein kinase family. ABL subfamily. As to quaternary structure, interacts with PSMA7. Interacts with CTTN. Found in a complex with ABL1, ABL2, CRK and UNC119; leading to the inhibition of CRK phosphorylation by ABL kinases. Requires Mg(2+) as cofactor. It depends on Mn(2+) as a cofactor. Post-translationally, phosphorylated at Tyr-261 by ABL1 in response to oxidative stress. Phosphorylated by PDGFRB. In terms of processing, polyubiquitinated. Polyubiquitination of ABL2 leads to degradation. In terms of tissue distribution, most abundant in adult mouse brain, especially in synapse-rich regions.

The protein localises to the cytoplasm. Its subcellular location is the cytoskeleton. It catalyses the reaction L-tyrosyl-[protein] + ATP = O-phospho-L-tyrosyl-[protein] + ADP + H(+). With respect to regulation, stabilized in the inactive form by an association between the SH3 domain and the SH2-TK linker region, interactions of the N-terminal cap, and contributions from an N-terminal myristoyl group and phospholipids. Activated by autophosphorylation as well as by SRC-family kinase-mediated phosphorylation. Activated by RIN1 binding to the SH2 and SH3 domains. Inhibited by imatinib mesylate (Gleevec). Phosphatidylinositol 4,5-bisphosphate (PIP2), a highly abundant phosphoinositide known to regulate cytoskeletal and membrane proteins, inhibits the tyrosine kinase activity. Non-receptor tyrosine-protein kinase that plays an ABL1-overlapping role in key processes linked to cell growth and survival such as cytoskeleton remodeling in response to extracellular stimuli, cell motility and adhesion, receptor endocytosis, autophagy, DNA damage response and apoptosis. Coordinates actin remodeling through tyrosine phosphorylation of proteins controlling cytoskeleton dynamics like MYH10 (involved in movement); CTTN (involved in signaling); or TUBA1 and TUBB (microtubule subunits). Binds directly F-actin and regulates actin cytoskeletal structure through its F-actin-bundling activity. Involved in the regulation of cell adhesion and motility through phosphorylation of key regulators of these processes such as CRK, CRKL or DOK1. Required for adhesion-dependent phosphorylation of ARHGAP35 which promotes its association with RASA1, resulting in recruitment of ARHGAP35 to the cell periphery where it inhibits RHO. Phosphorylates multiple receptor tyrosine kinases like PDGFRB and other substrates which are involved in endocytosis regulation such as RIN1. In brain, may regulate neurotransmission by phosphorylating proteins at the synapse. Finally, functions as its own regulator through autocatalytic activity as well as through phosphorylation of its inhibitor, ABI1. Positively regulates chemokine-mediated T-cell migration, polarization, and homing to lymph nodes and immune-challenged tissues, potentially via activation of NEDD9/HEF1 and RAP1. This Mus musculus (Mouse) protein is Tyrosine-protein kinase ABL2.